Here is a 731-residue protein sequence, read N- to C-terminus: DNA ligase (731 aa).

Residues 59–63 (DSEYD), 108–109 (SL), and Glu-142 each bind NAD(+). Residue Lys-144 is the N6-AMP-lysine intermediate of the active site. NAD(+) is bound by residues Arg-165, Glu-202, Lys-318, and Lys-342. Positions 434, 437, 452, and 458 each coordinate Zn(2+). One can recognise a BRCT domain in the interval 645–731 (LASSPLSGKI…ENDGQDSIKI (87 aa)).

Belongs to the NAD-dependent DNA ligase family. LigA subfamily. Requires Mg(2+) as cofactor. Mn(2+) serves as cofactor.

The enzyme catalyses NAD(+) + (deoxyribonucleotide)n-3'-hydroxyl + 5'-phospho-(deoxyribonucleotide)m = (deoxyribonucleotide)n+m + AMP + beta-nicotinamide D-nucleotide.. Its function is as follows. DNA ligase that catalyzes the formation of phosphodiester linkages between 5'-phosphoryl and 3'-hydroxyl groups in double-stranded DNA using NAD as a coenzyme and as the energy source for the reaction. It is essential for DNA replication and repair of damaged DNA. The polypeptide is DNA ligase (Zymomonas mobilis subsp. mobilis (strain ATCC 31821 / ZM4 / CP4)).